A 121-amino-acid chain; its full sequence is Small ribosomal subunit protein uS13 (121 aa).

Residues 91-121 are disordered; the sequence is HRRGLPVRGQNTKNNARTRKGPRKTVANKKK. Basic residues predominate over residues 106–121; the sequence is ARTRKGPRKTVANKKK.

This sequence belongs to the universal ribosomal protein uS13 family. As to quaternary structure, part of the 30S ribosomal subunit. Forms a loose heterodimer with protein S19. Forms two bridges to the 50S subunit in the 70S ribosome.

Functionally, located at the top of the head of the 30S subunit, it contacts several helices of the 16S rRNA. In the 70S ribosome it contacts the 23S rRNA (bridge B1a) and protein L5 of the 50S subunit (bridge B1b), connecting the 2 subunits; these bridges are implicated in subunit movement. Contacts the tRNAs in the A and P-sites. In Lysinibacillus sphaericus (strain C3-41), this protein is Small ribosomal subunit protein uS13.